Consider the following 430-residue polypeptide: Serine--tRNA ligase (430 aa).

231-233 (TSE) lines the L-serine pocket. 262–264 (RSE) contacts ATP. L-serine is bound at residue glutamate 285. 349 to 352 (EISS) serves as a coordination point for ATP. Residue serine 385 coordinates L-serine.

This sequence belongs to the class-II aminoacyl-tRNA synthetase family. Type-1 seryl-tRNA synthetase subfamily. Homodimer. The tRNA molecule binds across the dimer.

It localises to the cytoplasm. The catalysed reaction is tRNA(Ser) + L-serine + ATP = L-seryl-tRNA(Ser) + AMP + diphosphate + H(+). It catalyses the reaction tRNA(Sec) + L-serine + ATP = L-seryl-tRNA(Sec) + AMP + diphosphate + H(+). The protein operates within aminoacyl-tRNA biosynthesis; selenocysteinyl-tRNA(Sec) biosynthesis; L-seryl-tRNA(Sec) from L-serine and tRNA(Sec): step 1/1. Its function is as follows. Catalyzes the attachment of serine to tRNA(Ser). Is also able to aminoacylate tRNA(Sec) with serine, to form the misacylated tRNA L-seryl-tRNA(Sec), which will be further converted into selenocysteinyl-tRNA(Sec). The sequence is that of Serine--tRNA ligase from Ruegeria pomeroyi (strain ATCC 700808 / DSM 15171 / DSS-3) (Silicibacter pomeroyi).